Consider the following 75-residue polypeptide: uncharacterized protein (75 aa).

Positions 1–75 (MIKIYSTPTC…KAEIDKLIEK (75 aa)) constitute a Glutaredoxin domain. Cysteines 10 and 13 form a disulfide.

It belongs to the glutaredoxin family.

This is an uncharacterized protein from Clostridium pasteurianum.